Here is a 119-residue protein sequence, read N- to C-terminus: Large ribosomal subunit protein uL22c (119 aa).

The protein belongs to the universal ribosomal protein uL22 family. Part of the 50S ribosomal subunit.

The protein resides in the plastid. It localises to the chloroplast. In terms of biological role, this protein binds specifically to 23S rRNA. Its function is as follows. The globular domain of the protein is located near the polypeptide exit tunnel on the outside of the subunit, while an extended beta-hairpin is found that lines the wall of the exit tunnel in the center of the 70S ribosome. This is Large ribosomal subunit protein uL22c (rpl22) from Spirogyra maxima (Green alga).